The following is a 551-amino-acid chain: Probable alpha-glucosidase (551 aa).

The active-site Nucleophile is the Asp212. The active-site Proton donor is the Glu272.

This sequence belongs to the glycosyl hydrolase 13 family.

It catalyses the reaction Hydrolysis of terminal, non-reducing (1-&gt;4)-linked alpha-D-glucose residues with release of alpha-D-glucose.. The polypeptide is Probable alpha-glucosidase (aglA) (Rhizobium meliloti (strain 1021) (Ensifer meliloti)).